Reading from the N-terminus, the 128-residue chain is Ribonuclease pancreatic (128 aa).

The interval 1–20 is disordered; it reads KETAAMKFQRQHMDSGSSLS. Substrate-binding residues include K7 and R10. H12 acts as the Proton acceptor in catalysis. Disulfide bonds link C26–C84, C40–C95, C58–C110, and C65–C72. A glycan (N-linked (GlcNAc...) asparagine) is linked at N34. Substrate contacts are provided by residues 41-45, K66, and R85; that span reads KPVNT. Residue H119 is the Proton donor of the active site.

The protein belongs to the pancreatic ribonuclease family. As to quaternary structure, monomer. Interacts with and forms tight 1:1 complexes with RNH1. Dimerization of two such complexes may occur. Interaction with RNH1 inhibits this protein. Pancreas.

It localises to the secreted. It catalyses the reaction an [RNA] containing cytidine + H2O = an [RNA]-3'-cytidine-3'-phosphate + a 5'-hydroxy-ribonucleotide-3'-[RNA].. It carries out the reaction an [RNA] containing uridine + H2O = an [RNA]-3'-uridine-3'-phosphate + a 5'-hydroxy-ribonucleotide-3'-[RNA].. In terms of biological role, endonuclease that catalyzes the cleavage of RNA on the 3' side of pyrimidine nucleotides. Acts on single-stranded and double-stranded RNA. The polypeptide is Ribonuclease pancreatic (RNASE1) (Choloepus hoffmanni (Hoffmann's two-fingered sloth)).